A 270-amino-acid polypeptide reads, in one-letter code: Interleukin-1 alpha (270 aa).

Residues 1 to 114 constitute a propeptide that is removed on maturation; sequence MAKVPDLFED…HDLEETIQPR (114 aa). Residue N64 is glycosylated (N-linked (GlcNAc...) asparagine). K85 is subject to N6-acetyllysine. Residues 85-89 are nuclear localization signal (NLS); sequence KKRRL. S90 is subject to Phosphoserine. Residues N139 and N143 are each glycosylated (N-linked (GlcNAc...) asparagine).

It belongs to the IL-1 family. Monomer. Interacts with TMED10; the interaction mediates the translocation from the cytoplasm into the ERGIC (endoplasmic reticulum-Golgi intermediate compartment) and thereby secretion. Interacts with IL1R1. Interacts with S100A13; this interaction is the first step in the export of IL1A, followed by direct translocation of this complex across the plasma membrane. In terms of processing, acetylated within its nuclear localization sequence, which impacts subcellular localization. Post-translationally, proteolytic processed by CAPN1 in a calcium-dependent manner. Cleavage from 31 kDa precursor to 18 kDa biologically active molecules. Phosphorylated. Phosphorylation greatly enhances susceptibility to digestion and promotes the conversion of pre-IL1A alpha to the biologically active IL1A.

It localises to the nucleus. The protein resides in the cytoplasm. It is found in the secreted. In terms of biological role, cytokine constitutively present intracellularly in nearly all resting non-hematopoietic cells that plays an important role in inflammation and bridges the innate and adaptive immune systems. After binding to its receptor IL1R1 together with its accessory protein IL1RAP, forms the high affinity interleukin-1 receptor complex. Signaling involves the recruitment of adapter molecules such as MYD88, IRAK1 or IRAK4. In turn, mediates the activation of NF-kappa-B and the three MAPK pathways p38, p42/p44 and JNK pathways. Within the cell, acts as an alarmin and cell death results in its liberation in the extracellular space after disruption of the cell membrane to induce inflammation and alert the host to injury or damage. In addition to its role as a danger signal, which occurs when the cytokine is passively released by cell necrosis, directly senses DNA damage and acts as a signal for genotoxic stress without loss of cell integrity. The sequence is that of Interleukin-1 alpha from Mus musculus (Mouse).